Reading from the N-terminus, the 103-residue chain is Small ubiquitin-related modifier 3 (103 aa).

Glycyl lysine isopeptide (Lys-Gly) (interchain with G-Cter in SUMO2) cross-links involve residues Lys-5 and Lys-7. Lys-11 participates in a covalent cross-link: Glycyl lysine isopeptide (Lys-Gly) (interchain with G-Cter in SUMO); alternate. Lys-11 is covalently cross-linked (Glycyl lysine isopeptide (Lys-Gly) (interchain with G-Cter in SUMO2); alternate). The Ubiquitin-like domain maps to 15 to 92 (DHINLKVAGQ…IDVFQQQTGG (78 aa)). Residue Gly-92 forms a Glycyl lysine isopeptide (Gly-Lys) (interchain with K-? in acceptor proteins) linkage. The propeptide occupies 93–103 (VPESSLAGHSF).

This sequence belongs to the ubiquitin family. SUMO subfamily. In terms of assembly, covalently attached to a number of proteins. Interacts with BMAL1. Interacts with USP25 (via ts SIM domain); the interaction sumoylates USP25 and inhibits its ubiquitin hydrolyzing activity. Interacts with SAE2 and UBE2I. Post-translationally, polymeric chains can be formed through Lys-11 cross-linking. In terms of processing, cleavage of precursor form by SENP1, SENP2 or SENP5 is necessary for function. In terms of tissue distribution, expressed predominantly in liver.

The protein localises to the cytoplasm. The protein resides in the nucleus. It localises to the PML body. In terms of biological role, ubiquitin-like protein which can be covalently attached to target lysines either as a monomer or as a lysine-linked polymer. Does not seem to be involved in protein degradation and may function as an antagonist of ubiquitin in the degradation process. Plays a role in a number of cellular processes such as nuclear transport, DNA replication and repair, mitosis and signal transduction. Covalent attachment to its substrates requires prior activation by the E1 complex SAE1-SAE2 and linkage to the E2 enzyme UBE2I, and can be promoted by an E3 ligase such as PIAS1-4, RANBP2 or CBX4. Plays a role in the regulation of sumoylation status of SETX. This Homo sapiens (Human) protein is Small ubiquitin-related modifier 3.